Consider the following 356-residue polypeptide: 4-hydroxy-2-oxovalerate aldolase (356 aa).

In terms of domain architecture, Pyruvate carboxyltransferase spans 7–257; the sequence is PRVTDTTLRD…NPGLDVFKLM (251 aa). A substrate-binding site is contributed by 15–16; that stretch reads RD. Residue Asp16 participates in Mn(2+) binding. Catalysis depends on His19, which acts as the Proton acceptor. Residues Ser169 and His196 each contribute to the substrate site. Mn(2+) is bound by residues His196 and His198. Position 287 (Tyr287) interacts with substrate.

This sequence belongs to the 4-hydroxy-2-oxovalerate aldolase family.

The enzyme catalyses (S)-4-hydroxy-2-oxopentanoate = acetaldehyde + pyruvate. The polypeptide is 4-hydroxy-2-oxovalerate aldolase (Thermomicrobium roseum (strain ATCC 27502 / DSM 5159 / P-2)).